Consider the following 127-residue polypeptide: MRHRNSGRSFSRTSSHRKAMFSNMCCSLIEHELIRTTLPKAKDLRRYIEPLITVSKSDSVASRRRAFDILRSKSAVGKLFTDLGPRFAKRPGGYIRIIKCGYRDGDNAPMAIVELMDRPVISDDTEE.

Belongs to the bacterial ribosomal protein bL17 family. In terms of assembly, part of the 50S ribosomal subunit. Contacts protein L32.

The polypeptide is Large ribosomal subunit protein bL17 (Legionella pneumophila (strain Lens)).